Here is a 257-residue protein sequence, read N- to C-terminus: Phosphonates import ATP-binding protein PhnC (257 aa).

An ABC transporter domain is found at 4 to 248; the sequence is IEFKNVSKVY…VFSEIYGRTI (245 aa). Residue 37-44 coordinates ATP; it reads GLSGAGKS.

This sequence belongs to the ABC transporter superfamily. Phosphonates importer (TC 3.A.1.9.1) family. As to quaternary structure, the complex is composed of two ATP-binding proteins (PhnC), two transmembrane proteins (PhnE) and a solute-binding protein (PhnD).

The protein localises to the cell membrane. It catalyses the reaction phosphonate(out) + ATP + H2O = phosphonate(in) + ADP + phosphate + H(+). Functionally, part of the ABC transporter complex PhnCDE involved in phosphonates import. Responsible for energy coupling to the transport system. This is Phosphonates import ATP-binding protein PhnC from Staphylococcus aureus (strain COL).